The following is a 250-amino-acid chain: Hydroxyethylthiazole kinase (250 aa).

M39 provides a ligand contact to substrate. ATP is bound by residues R114 and T159. G186 contacts substrate.

This sequence belongs to the Thz kinase family. It depends on Mg(2+) as a cofactor.

The catalysed reaction is 5-(2-hydroxyethyl)-4-methylthiazole + ATP = 4-methyl-5-(2-phosphooxyethyl)-thiazole + ADP + H(+). Its pathway is cofactor biosynthesis; thiamine diphosphate biosynthesis; 4-methyl-5-(2-phosphoethyl)-thiazole from 5-(2-hydroxyethyl)-4-methylthiazole: step 1/1. Functionally, catalyzes the phosphorylation of the hydroxyl group of 4-methyl-5-beta-hydroxyethylthiazole (THZ). The protein is Hydroxyethylthiazole kinase of Lactococcus lactis subsp. cremoris (strain MG1363).